The following is a 1055-amino-acid chain: Ephrin type-B receptor 2 (1055 aa).

The signal sequence occupies residues 1–18 (MALRRLGAALLLLPLLAA). Residues 19 to 543 (VEETLMDSTT…QTSIQEKLPL (525 aa)) lie on the Extracellular side of the membrane. One can recognise an Eph LBD domain in the interval 20–202 (EETLMDSTTA…FYRKCPRIIQ (183 aa)). 2 cysteine pairs are disulfide-bonded: Cys-62/Cys-184 and Cys-97/Cys-107. N-linked (GlcNAc...) asparagine glycosylation is found at Asn-265, Asn-336, Asn-428, and Asn-482. 2 Fibronectin type-III domains span residues 324-434 (IPSA…TNQA) and 435-530 (APSA…TMTE). The chain crosses the membrane as a helical span at residues 544–564 (IIGSSAAGLVFLIAVVVIAIV). At 565–1055 (CNRRGFERAD…KESNDCSCGG (491 aa)) the chain is on the cytoplasmic side. Residues 621–884 (VKIEQVIGAG…QIVNTLDKMI (264 aa)) enclose the Protein kinase domain. Residues 627–635 (IGAGEFGEV) and Lys-653 each bind ATP. Asp-746 acts as the Proton acceptor in catalysis. Lys-891 is covalently cross-linked (Glycyl lysine isopeptide (Lys-Gly) (interchain with G-Cter in ubiquitin)). The SAM domain occupies 913–977 (TSFNTVDEWL…LNSIQVMRAQ (65 aa)). Ser-983 and Val-984 each carry phosphoserine. A PDZ-binding (in isoform 2) motif is present at residues 984–986 (VEG). The segment at 990–1055 (ARRPRATGRT…KESNDCSCGG (66 aa)) is disordered. A compositionally biased stretch (basic residues) spans 991–1002 (RRPRATGRTKRC). The span at 1025 to 1049 (KKTDPGRGREIQGIFFKEDSHKESN) shows a compositional bias: basic and acidic residues.

Belongs to the protein kinase superfamily. Tyr protein kinase family. Ephrin receptor subfamily. As to quaternary structure, heterotetramer upon binding of the ligand. The heterotetramer is composed of an ephrin dimer and a receptor dimer. Interacts (via PDZ-binding motif) with GRIP1 and PICK1 (via PDZ domain). Interacts with ARHGEF15; mediates ARHGEF15 phosphorylation, ubiquitination and degradation by the proteasome. Interacts with AQP1; involved in endolymph production in the inner ear. Interacts with SPSB1 and SPSB4. The phosphorylated form interacts with RASA1 (via SH2 domain 1). Interacts with EFNA5. Interacts with SH2D3C. In terms of processing, autophosphorylated; ligand binding stimulates autophosphorylation on tyrosine residues. Post-translationally, polyubiquitinated; ligand binding stimulates ubiquitination. Ubiquitinated by RNF186 at Lys-891, mainly through 'Lys-27'-linked polyubiquitin chains. Ubiquitinated by CRL2(KLHDC2) E3 ligase complex. Ligand binding induces cleavage by matrix metalloproteinases (MMPs) such as MMP7/MMP9, producing an EphB2/N-terminal fragment (NTF) and a C-terminal long fragment (EphB2-LF). EphB2-LF is further cleaved by MMPs, producing EphB2/CTF1 which is further cleaved by the PS1/gamma-secretase producing EphB2/CTF2. In terms of tissue distribution, brain, heart, lung, kidney, placenta, pancreas, liver and skeletal muscle. Preferentially expressed in fetal brain.

It is found in the cell membrane. Its subcellular location is the cell projection. The protein localises to the axon. It localises to the dendrite. The enzyme catalyses L-tyrosyl-[protein] + ATP = O-phospho-L-tyrosyl-[protein] + ADP + H(+). Receptor tyrosine kinase which binds promiscuously transmembrane ephrin-B family ligands residing on adjacent cells, leading to contact-dependent bidirectional signaling into neighboring cells. The signaling pathway downstream of the receptor is referred to as forward signaling while the signaling pathway downstream of the ephrin ligand is referred to as reverse signaling. Functions in axon guidance during development. Involved in the guidance of commissural axons, that form a major interhemispheric connection between the 2 temporal lobes of the cerebral cortex. Also involved in guidance of contralateral inner ear efferent growth cones at the midline and of retinal ganglion cell axons to the optic disk. In addition to axon guidance, also regulates dendritic spines development and maturation and stimulates the formation of excitatory synapses. Upon activation by EFNB1, abolishes the ARHGEF15-mediated negative regulation on excitatory synapse formation. Controls other aspects of development including angiogenesis, palate development and in inner ear development through regulation of endolymph production. Forward and reverse signaling through the EFNB2/EPHB2 complex regulate movement and adhesion of cells that tubularize the urethra and septate the cloaca. May function as a tumor suppressor. May be involved in the regulation of platelet activation and blood coagulation. The chain is Ephrin type-B receptor 2 (EPHB2) from Homo sapiens (Human).